Reading from the N-terminus, the 320-residue chain is tRNA pseudouridine synthase B (320 aa).

Residue Asp-48 is the Nucleophile of the active site.

This sequence belongs to the pseudouridine synthase TruB family. Type 1 subfamily.

It catalyses the reaction uridine(55) in tRNA = pseudouridine(55) in tRNA. In terms of biological role, responsible for synthesis of pseudouridine from uracil-55 in the psi GC loop of transfer RNAs. The chain is tRNA pseudouridine synthase B from Mycobacterium leprae (strain TN).